The chain runs to 191 residues: Lipoprotein signal peptidase (191 aa).

The next 3 membrane-spanning stretches (helical) occupy residues 26-46 (VWFP…LKAW), 84-104 (AVPL…YLLW), and 110-130 (FLTV…IDGL). Catalysis depends on residues aspartate 137 and aspartate 163. The chain crosses the membrane as a helical span at residues 156 to 176 (FPIFNIADMCVVGGTILLLVA).

This sequence belongs to the peptidase A8 family.

The protein localises to the cell membrane. It carries out the reaction Release of signal peptides from bacterial membrane prolipoproteins. Hydrolyzes -Xaa-Yaa-Zaa-|-(S,diacylglyceryl)Cys-, in which Xaa is hydrophobic (preferably Leu), and Yaa (Ala or Ser) and Zaa (Gly or Ala) have small, neutral side chains.. The protein operates within protein modification; lipoprotein biosynthesis (signal peptide cleavage). Functionally, this protein specifically catalyzes the removal of signal peptides from prolipoproteins. The protein is Lipoprotein signal peptidase of Deinococcus radiodurans (strain ATCC 13939 / DSM 20539 / JCM 16871 / CCUG 27074 / LMG 4051 / NBRC 15346 / NCIMB 9279 / VKM B-1422 / R1).